A 538-amino-acid polypeptide reads, in one-letter code: SWM histone demethylase complex subunit phf2 (538 aa).

Disordered stretches follow at residues 28–47 (RFPN…NQNG), 98–150 (EIES…SSPL), and 198–222 (TKSG…RRRG). Over residues 98–111 (EIESSKNQETDAKS) the composition is skewed to basic and acidic residues. A PHD-type zinc finger spans residues 232–288 (AMKCSVCQRLQSPPKNRIVFCDGCNTPFHQLCHEPYISDELLDSPNGEWFCDDCIRR). Residues 367–392 (GDQYLSLNNGTESQSKTTKHSTSLPS) are compositionally biased toward polar residues. Residues 367 to 396 (GDQYLSLNNGTESQSKTTKHSTSLPSTEPV) are disordered.

As to quaternary structure, component of the SWM histone demethylase complex composed of at least lsd1, lsd2, phf1 and phf2.

The protein resides in the nucleus. Its function is as follows. Component of the SWM histone demethylase complex that specifically demethylates H3K9me2, a specific tag for epigenetic transcriptional activation, thereby acting as a corepressor. Has a role in regulating heterochromatin propagation and euchromatic transcription. The chain is SWM histone demethylase complex subunit phf2 (phf2) from Schizosaccharomyces pombe (strain 972 / ATCC 24843) (Fission yeast).